Here is a 524-residue protein sequence, read N- to C-terminus: Coatomer subunit delta-1 (524 aa).

Positions 215–244 are disordered; the sequence is MDMDSFASKPKGGRPSAAATAPGKGLGMKL. Residues 283-524 enclose the MHD domain; the sequence is SDPVTVTIEE…RLVAANYQVV (242 aa).

Belongs to the adaptor complexes medium subunit family. Delta-COP subfamily. In terms of assembly, oligomeric complex that consists of at least the alpha, beta, beta', gamma, delta, epsilon and zeta subunits.

It is found in the cytoplasm. Its subcellular location is the golgi apparatus membrane. The protein localises to the cytoplasmic vesicle. The protein resides in the COPI-coated vesicle membrane. The coatomer is a cytosolic protein complex that binds to dilysine motifs and reversibly associates with Golgi non-clathrin-coated vesicles, which further mediate biosynthetic protein transport from the ER, via the Golgi up to the trans Golgi network. Coatomer complex is required for budding from Golgi membranes, and is essential for the retrograde Golgi-to-ER transport of dilysine-tagged proteins. In Oryza sativa subsp. japonica (Rice), this protein is Coatomer subunit delta-1.